We begin with the raw amino-acid sequence, 152 residues long: Aspartate 1-decarboxylase (152 aa).

Catalysis depends on Ser24, which acts as the Schiff-base intermediate with substrate; via pyruvic acid. Pyruvic acid (Ser) is present on Ser24. Residue Thr56 coordinates substrate. Tyr57 acts as the Proton donor in catalysis. 72-74 contacts substrate; the sequence is GAA.

This sequence belongs to the PanD family. Heterooctamer of four alpha and four beta subunits. The cofactor is pyruvate. Post-translationally, is synthesized initially as an inactive proenzyme, which is activated by self-cleavage at a specific serine bond to produce a beta-subunit with a hydroxyl group at its C-terminus and an alpha-subunit with a pyruvoyl group at its N-terminus.

The protein localises to the cytoplasm. It carries out the reaction L-aspartate + H(+) = beta-alanine + CO2. The protein operates within cofactor biosynthesis; (R)-pantothenate biosynthesis; beta-alanine from L-aspartate: step 1/1. In terms of biological role, catalyzes the pyruvoyl-dependent decarboxylation of aspartate to produce beta-alanine. The protein is Aspartate 1-decarboxylase of Rhodospirillum centenum (strain ATCC 51521 / SW).